A 206-amino-acid chain; its full sequence is Ribosomal RNA large subunit methyltransferase E (206 aa).

S-adenosyl-L-methionine-binding residues include glycine 60, tryptophan 62, aspartate 80, aspartate 96, and aspartate 121. Lysine 161 (proton acceptor) is an active-site residue.

It belongs to the class I-like SAM-binding methyltransferase superfamily. RNA methyltransferase RlmE family.

It is found in the cytoplasm. It carries out the reaction uridine(2552) in 23S rRNA + S-adenosyl-L-methionine = 2'-O-methyluridine(2552) in 23S rRNA + S-adenosyl-L-homocysteine + H(+). Functionally, specifically methylates the uridine in position 2552 of 23S rRNA at the 2'-O position of the ribose in the fully assembled 50S ribosomal subunit. This chain is Ribosomal RNA large subunit methyltransferase E, found in Francisella tularensis subsp. novicida (strain U112).